We begin with the raw amino-acid sequence, 342 residues long: Ferredoxin--NADP reductase (342 aa).

FAD contacts are provided by Cys-17, Asp-36, Gln-44, Tyr-49, Ile-89, Phe-124, Asp-289, and Thr-330.

The protein belongs to the ferredoxin--NADP reductase type 2 family. As to quaternary structure, homodimer. Requires FAD as cofactor.

It carries out the reaction 2 reduced [2Fe-2S]-[ferredoxin] + NADP(+) + H(+) = 2 oxidized [2Fe-2S]-[ferredoxin] + NADPH. The polypeptide is Ferredoxin--NADP reductase (Rhodopseudomonas palustris (strain HaA2)).